Consider the following 285-residue polypeptide: UDP-3-O-acyl-N-acetylglucosamine deacetylase (285 aa).

Zn(2+)-binding residues include H89, H243, and D247. Catalysis depends on H270, which acts as the Proton donor.

Belongs to the LpxC family. It depends on Zn(2+) as a cofactor.

It carries out the reaction a UDP-3-O-[(3R)-3-hydroxyacyl]-N-acetyl-alpha-D-glucosamine + H2O = a UDP-3-O-[(3R)-3-hydroxyacyl]-alpha-D-glucosamine + acetate. It participates in glycolipid biosynthesis; lipid IV(A) biosynthesis; lipid IV(A) from (3R)-3-hydroxytetradecanoyl-[acyl-carrier-protein] and UDP-N-acetyl-alpha-D-glucosamine: step 2/6. Catalyzes the hydrolysis of UDP-3-O-myristoyl-N-acetylglucosamine to form UDP-3-O-myristoylglucosamine and acetate, the committed step in lipid A biosynthesis. The sequence is that of UDP-3-O-acyl-N-acetylglucosamine deacetylase from Thermosynechococcus vestitus (strain NIES-2133 / IAM M-273 / BP-1).